The chain runs to 377 residues: Nitric oxide reductase FlRd-NAD(+) reductase (377 aa).

The protein belongs to the FAD-dependent oxidoreductase family. FAD is required as a cofactor.

The protein resides in the cytoplasm. The enzyme catalyses 2 reduced [nitric oxide reductase rubredoxin domain] + NAD(+) + H(+) = 2 oxidized [nitric oxide reductase rubredoxin domain] + NADH. It participates in nitrogen metabolism; nitric oxide reduction. Its function is as follows. One of at least two accessory proteins for anaerobic nitric oxide (NO) reductase. Reduces the rubredoxin moiety of NO reductase. The polypeptide is Nitric oxide reductase FlRd-NAD(+) reductase (Salmonella gallinarum (strain 287/91 / NCTC 13346)).